Reading from the N-terminus, the 71-residue chain is Protein SlyX homolog (71 aa).

Belongs to the SlyX family.

The polypeptide is Protein SlyX homolog (Thioalkalivibrio sulfidiphilus (strain HL-EbGR7)).